A 422-amino-acid chain; its full sequence is SPbeta prophage-derived glycosyltransferase SunS (422 aa).

The protein belongs to the glycosyltransferase 2 family.

Its function is as follows. Transfers a hexose moiety onto 'Cys-41' of bacteriocin sublancin-168 (SunA). Accepts UDP-glucose (UDP-Glc), UDP-N-acetylglucosamine (UDP-GlcNAc), UDP-galactose (UDP-Gal), UDP-xylose (UDP-Xyl) and GDP-mannose as substrate. The sequence is that of SPbeta prophage-derived glycosyltransferase SunS (sunS) from Bacillus subtilis (strain 168).